Here is a 192-residue protein sequence, read N- to C-terminus: Peptidyl-tRNA hydrolase (192 aa).

Y14 serves as a coordination point for tRNA. Residue H19 is the Proton acceptor of the active site. Residues Y64, N66, and N112 each contribute to the tRNA site.

The protein belongs to the PTH family. As to quaternary structure, monomer.

The protein localises to the cytoplasm. The catalysed reaction is an N-acyl-L-alpha-aminoacyl-tRNA + H2O = an N-acyl-L-amino acid + a tRNA + H(+). In terms of biological role, hydrolyzes ribosome-free peptidyl-tRNAs (with 1 or more amino acids incorporated), which drop off the ribosome during protein synthesis, or as a result of ribosome stalling. Functionally, catalyzes the release of premature peptidyl moieties from peptidyl-tRNA molecules trapped in stalled 50S ribosomal subunits, and thus maintains levels of free tRNAs and 50S ribosomes. This chain is Peptidyl-tRNA hydrolase, found in Anaeromyxobacter sp. (strain K).